Consider the following 186-residue polypeptide: MKTAHEIRPGNVIMLDGSPWVVQKTETTRSGRNAAIVKLKLKHVLLDSGTEQTFKGEDKMDVIVLERLDCTYSYFADPMYVFMDADYNQYDVEADNLGDAAAYIIDGMEETCQVTFYEGKAISVELPTHIVREVIYTEPSARGDTSGKVMKPATITGGGTVTVADFVKVGDKIEIDTRTGEFKKRA.

Belongs to the elongation factor P family.

It localises to the cytoplasm. Its pathway is protein biosynthesis; polypeptide chain elongation. In terms of biological role, involved in peptide bond synthesis. Stimulates efficient translation and peptide-bond synthesis on native or reconstituted 70S ribosomes in vitro. Probably functions indirectly by altering the affinity of the ribosome for aminoacyl-tRNA, thus increasing their reactivity as acceptors for peptidyl transferase. The chain is Elongation factor P from Shewanella denitrificans (strain OS217 / ATCC BAA-1090 / DSM 15013).